The chain runs to 310 residues: Protein BIG GRAIN 1 (310 aa).

Residues 77–140 (SYRARAPGPH…EKKAKKPGAS (64 aa)) form a disordered region. The span at 90–106 (SSSSECSSYGGFSSSEA) shows a compositional bias: low complexity.

It belongs to the BIG GRAIN 1 (BG1) plant protein family. Mostly expressed in the vascular tissues of leaves, culms and young panicles, especially in hulls.

The protein localises to the cell membrane. Functionally, involved in auxin transport. Positive regulator of the auxin signaling pathway involved in gravitropism, plant growth and grain development. The sequence is that of Protein BIG GRAIN 1 from Oryza sativa subsp. japonica (Rice).